The following is a 201-amino-acid chain: MSKRIAGPEIERLIQLLARVPGLGPRSARRAALHLIKKKEALLVPLGGAMQEAAEKVRICSCCGNVDTSDPCTICTDERRDPATLIVVEDVSDLWALERADTMNVRYHVLGGRLSPLDGIGPDDLNIKGLVERVASGAIKEVILAVNATVEGQTTAHYITDQLSNFDMRVTRLAHGVPVGGELDYLDEGTLAAALRARTTL.

The segment at 60–75 (CSCCGNVDTSDPCTIC) adopts a C4-type zinc-finger fold. A Toprim domain is found at 83–178 (ATLIVVEDVS…RVTRLAHGVP (96 aa)).

Belongs to the RecR family.

Its function is as follows. May play a role in DNA repair. It seems to be involved in an RecBC-independent recombinational process of DNA repair. It may act with RecF and RecO. The protein is Recombination protein RecR of Brucella melitensis biotype 2 (strain ATCC 23457).